A 445-amino-acid polypeptide reads, in one-letter code: Ribosomal protein uS12 methylthiotransferase RimO (445 aa).

The region spanning 13 to 123 (PRVGFVSLGC…VMAAIHHHLP (111 aa)) is the MTTase N-terminal domain. [4Fe-4S] cluster contacts are provided by C22, C58, C87, C154, C158, and C161. One can recognise a Radical SAM core domain in the interval 140–377 (LTPKHYAYLK…MQQQEIISKQ (238 aa)). The TRAM domain occupies 380–445 (AVKKGQQLRV…DIHDLWTEKI (66 aa)).

The protein belongs to the methylthiotransferase family. RimO subfamily. The cofactor is [4Fe-4S] cluster.

Its subcellular location is the cytoplasm. The catalysed reaction is L-aspartate(89)-[ribosomal protein uS12]-hydrogen + (sulfur carrier)-SH + AH2 + 2 S-adenosyl-L-methionine = 3-methylsulfanyl-L-aspartate(89)-[ribosomal protein uS12]-hydrogen + (sulfur carrier)-H + 5'-deoxyadenosine + L-methionine + A + S-adenosyl-L-homocysteine + 2 H(+). Its function is as follows. Catalyzes the methylthiolation of an aspartic acid residue of ribosomal protein uS12. This is Ribosomal protein uS12 methylthiotransferase RimO from Nitrosomonas eutropha (strain DSM 101675 / C91 / Nm57).